Consider the following 669-residue polypeptide: RNA-binding protein 14 (669 aa).

2 RRM domains span residues 1-73 and 79-149; these read MKIF…MSRP and WKIF…LSTK. Glycyl lysine isopeptide (Lys-Gly) (interchain with G-Cter in SUMO2) cross-links involve residues Lys-126, Lys-135, Lys-138, Lys-149, and Lys-153. Disordered stretches follow at residues 147 to 175 and 193 to 232; these read STKG…DTAF and NSTG…PLTA. Phosphoserine is present on Ser-161. Lys-164 is modified (N6-acetyllysine; alternate). Lys-164 participates in a covalent cross-link: Glycyl lysine isopeptide (Lys-Gly) (interchain with G-Cter in SUMO2); alternate. Thr-206 bears the Phosphothreonine mark. A phosphoserine mark is found at Ser-220, Ser-242, Ser-244, Ser-256, Ser-272, and Ser-280. The segment at 284–303 is disordered; that stretch reads PYRGQLASPSSQSAAASSLG. The segment covering 287 to 303 has biased composition (low complexity); the sequence is GQLASPSSQSAAASSLG. The tract at residues 307–354 is TRBP-interacting domain; interaction with STIL; sequence GAQPSASALSSYGGQAAAASSLNSYGAQGSSLASYGNQPSSYGAQAAS. Phosphoserine is present on residues Ser-520, Ser-523, Ser-527, and Ser-562. A disordered region spans residues 566-590; the sequence is VANANSTPPPYERTRLSPPRASYDD. Thr-572 carries the phosphothreonine modification. Ser-582 carries the phosphoserine modification. Lys-600 participates in a covalent cross-link: Glycyl lysine isopeptide (Lys-Gly) (interchain with G-Cter in SUMO2). Phosphoserine occurs at positions 618, 620, 623, 627, 643, and 649.

As to quaternary structure, isoform 1: Interacts with NCOA6, CITED1 and XRCC5/KU86. Isoform 1: Interacts with SS18 isoform 1. Isoform 1: Interacts with SS18 isoform 2. Interacts with STIL and interferes with its interaction with CPAP. Interacts with gamma-tubulin. Part of the HDP-RNP complex composed of at least HEXIM1, PRKDC, XRCC5, XRCC6, paraspeckle proteins (SFPQ, NONO, PSPC1, RBM14, and MATR3) and NEAT1 RNA. Interacts with RBPMS; the interaction allows cooperative assembly of RNA-bound stable cell-specific alternative splicing regulatory complexes. As to expression, expressed in all tissues tested, including brain, heart, skeletal muscle, colon, thymus, spleen, kidney, liver, small intestine, placenta, lung and peripheral blood lymphocytes.

It localises to the nucleus. Its subcellular location is the nucleolus. The protein localises to the cytoplasm. Isoform 1 may function as a nuclear receptor coactivator, enhancing transcription through other coactivators such as NCOA6 and CITED1. Isoform 2, functions as a transcriptional repressor, modulating transcriptional activities of coactivators including isoform 1, NCOA6 and CITED1. Regulates centriole biogenesis by suppressing the formation of aberrant centriolar protein complexes in the cytoplasm and thus preserving mitotic spindle integrity. Prevents the formation of the STIL-CPAP complex (which can induce the formation of aberrant centriolar protein complexes) by interfering with the interaction of STIL with CPAP. Plays a role in the regulation of DNA virus-mediated innate immune response by assembling into the HDP-RNP complex, a complex that serves as a platform for IRF3 phosphorylation and subsequent innate immune response activation through the cGAS-STING pathway. Also involved in the regulation of pre-mRNA alternative splicing. This chain is RNA-binding protein 14 (RBM14), found in Homo sapiens (Human).